The chain runs to 127 residues: Large ribosomal subunit protein bL12 (127 aa).

Belongs to the bacterial ribosomal protein bL12 family. Homodimer. Part of the ribosomal stalk of the 50S ribosomal subunit. Forms a multimeric L10(L12)X complex, where L10 forms an elongated spine to which 2 to 4 L12 dimers bind in a sequential fashion. Binds GTP-bound translation factors.

In terms of biological role, forms part of the ribosomal stalk which helps the ribosome interact with GTP-bound translation factors. Is thus essential for accurate translation. The chain is Large ribosomal subunit protein bL12 from Syntrophobacter fumaroxidans (strain DSM 10017 / MPOB).